The following is a 251-amino-acid chain: Flap endonuclease Xni (251 aa).

Aspartate 104 provides a ligand contact to Mg(2+). Positions 160-250 constitute a 5'-3' exonuclease domain; that stretch reads VLPRQLPDYW…SGNLQQLRLK (91 aa). K(+) is bound by residues leucine 171, alanine 172, proline 180, valine 182, and valine 185. The tract at residues 184-189 is interaction with DNA; sequence GVGAKT.

This sequence belongs to the Xni family. The cofactor is Mg(2+). K(+) serves as cofactor.

Has flap endonuclease activity. During DNA replication, flap endonucleases cleave the 5'-overhanging flap structure that is generated by displacement synthesis when DNA polymerase encounters the 5'-end of a downstream Okazaki fragment. This is Flap endonuclease Xni from Yersinia pestis bv. Antiqua (strain Nepal516).